We begin with the raw amino-acid sequence, 274 residues long: Large ribosomal subunit protein uL2 (274 aa).

The segment at glycine 223–lysine 274 is disordered. Residues aspartate 230–serine 240 are compositionally biased toward basic and acidic residues. Residues tyrosine 256–lysine 274 show a composition bias toward basic residues.

The protein belongs to the universal ribosomal protein uL2 family. As to quaternary structure, part of the 50S ribosomal subunit. Forms a bridge to the 30S subunit in the 70S ribosome.

Its function is as follows. One of the primary rRNA binding proteins. Required for association of the 30S and 50S subunits to form the 70S ribosome, for tRNA binding and peptide bond formation. It has been suggested to have peptidyltransferase activity; this is somewhat controversial. Makes several contacts with the 16S rRNA in the 70S ribosome. The polypeptide is Large ribosomal subunit protein uL2 (Nautilia profundicola (strain ATCC BAA-1463 / DSM 18972 / AmH)).